Reading from the N-terminus, the 193-residue chain is Putative manganese efflux pump MntP (193 aa).

A run of 6 helical transmembrane segments spans residues 6–26, 39–59, 61–81, 106–126, 132–152, and 165–185; these read VVFV…GIAC, VAGT…YAGL, IADV…TVIG, LGLL…GLTF, NIGL…YLGF, and WVGI…LAEH.

This sequence belongs to the MntP (TC 9.B.29) family.

Its subcellular location is the cell membrane. Functionally, probably functions as a manganese efflux pump. The sequence is that of Putative manganese efflux pump MntP from Dehalococcoides mccartyi (strain ATCC BAA-2266 / KCTC 15142 / 195) (Dehalococcoides ethenogenes (strain 195)).